The sequence spans 329 residues: RNA-binding protein CP33, chloroplastic (329 aa).

The N-terminal 69 residues, 1–69 (MSSAYCSSAV…NIRRHRFFCA (69 aa)), are a transit peptide targeting the chloroplast. Over residues 77-104 (ADDEIQASVEEEEEVEEEGDEGEEEVEE) the composition is skewed to acidic residues. 2 disordered regions span residues 77-117 (ADDE…EEGR) and 296-329 (SERE…NVSA). 2 RRM domains span residues 116–194 (GRLY…FPEV) and 219–297 (HKVY…LASE).

The protein resides in the plastid. It is found in the chloroplast. Its function is as follows. Could be involved in splicing and/or processing of chloroplast RNAs. This Arabidopsis thaliana (Mouse-ear cress) protein is RNA-binding protein CP33, chloroplastic.